Consider the following 350-residue polypeptide: Alcohol dehydrogenase 1 (350 aa).

Cysteine 44, threonine 46, histidine 67, cysteine 98, cysteine 101, cysteine 104, cysteine 112, and cysteine 154 together coordinate Zn(2+). 2 residues coordinate an alcohol: threonine 46 and histidine 67. Threonine 46 contacts NAD(+). Residues 178-182 (GAGGG), aspartate 202, lysine 207, 271-273 (IGL), and arginine 343 contribute to the NAD(+) site.

The protein belongs to the zinc-containing alcohol dehydrogenase family. In terms of assembly, homotetramer. It depends on Zn(2+) as a cofactor.

The protein resides in the cytoplasm. It is found in the secreted. The enzyme catalyses a primary alcohol + NAD(+) = an aldehyde + NADH + H(+). The catalysed reaction is a secondary alcohol + NAD(+) = a ketone + NADH + H(+). This is Alcohol dehydrogenase 1 (alcA) from Emericella nidulans (strain FGSC A4 / ATCC 38163 / CBS 112.46 / NRRL 194 / M139) (Aspergillus nidulans).